Reading from the N-terminus, the 201-residue chain is IMP cyclohydrolase (201 aa).

Belongs to the archaeal IMP cyclohydrolase family.

The catalysed reaction is IMP + H2O = 5-formamido-1-(5-phospho-D-ribosyl)imidazole-4-carboxamide. The protein operates within purine metabolism; IMP biosynthesis via de novo pathway; IMP from 5-formamido-1-(5-phospho-D-ribosyl)imidazole-4-carboxamide: step 1/1. In terms of biological role, catalyzes the cyclization of 5-formylamidoimidazole-4-carboxamide ribonucleotide to IMP. The sequence is that of IMP cyclohydrolase from Methanococcus maripaludis (strain DSM 14266 / JCM 13030 / NBRC 101832 / S2 / LL).